The chain runs to 38 residues: Photosystem II reaction center protein L (38 aa).

Residues 17–37 (SLYWGLLLIFVLAVSFSNYFF) form a helical membrane-spanning segment.

The protein belongs to the PsbL family. PSII is composed of 1 copy each of membrane proteins PsbA, PsbB, PsbC, PsbD, PsbE, PsbF, PsbH, PsbI, PsbJ, PsbK, PsbL, PsbM, PsbT, PsbX, PsbY, PsbZ, Psb30/Ycf12, at least 3 peripheral proteins of the oxygen-evolving complex and a large number of cofactors. It forms dimeric complexes.

Its subcellular location is the plastid membrane. Its function is as follows. One of the components of the core complex of photosystem II (PSII). PSII is a light-driven water:plastoquinone oxidoreductase that uses light energy to abstract electrons from H(2)O, generating O(2) and a proton gradient subsequently used for ATP formation. It consists of a core antenna complex that captures photons, and an electron transfer chain that converts photonic excitation into a charge separation. This subunit is found at the monomer-monomer interface and is required for correct PSII assembly and/or dimerization. The polypeptide is Photosystem II reaction center protein L (Aneura mirabilis (Parasitic liverwort)).